The sequence spans 384 residues: NAD-capped RNA hydrolase NPY1 (384 aa).

Residues Cys179, Cys182, Cys197, and Cys206 each contribute to the Zn(2+) site. Residues 219-351 (PRTDPTVIIA…AGGYRVPFKN (133 aa)) enclose the Nudix hydrolase domain. Mg(2+) contacts are provided by Ala256, Glu272, Glu276, and Glu322. Substrate contacts are provided by residues 256–258 (AGF), Glu272, Glu276, and Glu322. Positions 257-278 (GFMEPSETIEEACIREIWEETG) match the Nudix box motif. The Microbody targeting signal motif lies at 378 to 380 (KTS).

This sequence belongs to the Nudix hydrolase family. NudC subfamily. Homodimer. Requires Mg(2+) as cofactor. It depends on Zn(2+) as a cofactor.

It is found in the peroxisome. It catalyses the reaction a 5'-end NAD(+)-phospho-ribonucleoside in mRNA + H2O = a 5'-end phospho-adenosine-phospho-ribonucleoside in mRNA + beta-nicotinamide D-ribonucleotide + 2 H(+). The enzyme catalyses NAD(+) + H2O = beta-nicotinamide D-ribonucleotide + AMP + 2 H(+). The catalysed reaction is NADH + H2O = reduced beta-nicotinamide D-ribonucleotide + AMP + 2 H(+). Its function is as follows. mRNA decapping enzyme that specifically removes the nicotinamide adenine dinucleotide (NAD) cap from a subset of mRNAs by hydrolyzing the diphosphate linkage to produce nicotinamide mononucleotide (NMN) and 5' monophosphate mRNA. The NAD-cap is present at the 5'-end of some RNAs; in contrast to the canonical N7 methylguanosine (m7G) cap, the NAD cap promotes mRNA decay. Mediates the hydrolysis of some nucleoside diphosphate derivatives. This is NAD-capped RNA hydrolase NPY1 from Saccharomyces cerevisiae (strain ATCC 204508 / S288c) (Baker's yeast).